The primary structure comprises 149 residues: Transcriptional repressor NrdR (149 aa).

A zinc finger lies at 3–34 (CPFCSENDTKVIDSRLVADGHQVRRRRQCLAC). The 91-residue stretch at 49–139 (PKVIKSNGNR…VYRSFEDIRE (91 aa)) folds into the ATP-cone domain.

It belongs to the NrdR family. Zn(2+) is required as a cofactor.

Functionally, negatively regulates transcription of bacterial ribonucleotide reductase nrd genes and operons by binding to NrdR-boxes. The chain is Transcriptional repressor NrdR from Vibrio parahaemolyticus serotype O3:K6 (strain RIMD 2210633).